A 409-amino-acid polypeptide reads, in one-letter code: Microfibrillar-associated protein 3-like (409 aa).

Residues 1–28 (MDRLKSHLTVCFLPSVPFLILVSTLATA) form the signal peptide. At 29-149 (KSVTNSTLNG…LRVIFTSGDM (121 aa)) the chain is on the extracellular side. Asn-33, Asn-37, Asn-67, Asn-111, and Asn-135 each carry an N-linked (GlcNAc...) asparagine glycan. Residues 47–141 (PVIIARTDHI…GTVNNTVTLR (95 aa)) enclose the Ig-like C2-type domain. Cys-68 and Cys-125 are oxidised to a cystine. Residues 150-172 (GVYYMVVCLVAFTIVMVLNITRL) form a helical membrane-spanning segment. At 173-409 (CMMSSHLKKT…NTCIIYESHV (237 aa)) the chain is on the cytoplasmic side. Position 287 is a phosphotyrosine; by EGFR (Tyr-287). Disordered regions lie at residues 292–311 (SLKRSDSPAADSDASSLHEQ) and 320–385 (SVHP…VLPP). Residues Ser-298, Ser-303, Ser-306, and Ser-307 each carry the phosphoserine modification. Residues 339–355 (EVKDVEETELSAEHSPE) show a composition bias toward basic and acidic residues. The segment covering 363–377 (VTSTELTSEEPTPVE) has biased composition (low complexity).

As to expression, highly expressed in testis.

The protein localises to the cell membrane. It localises to the nucleus. Its subcellular location is the cytoplasm. Its function is as follows. May participate in the nuclear signaling of EGFR and MAPK1/ERK2. May a have a role in metastasis. This chain is Microfibrillar-associated protein 3-like (MFAP3L), found in Homo sapiens (Human).